Consider the following 312-residue polypeptide: 6-hydroxy-3-succinoylpyridine 3-monooxygenase HspA (312 aa).

The NYN domain maps to 14–210 (IYIDGYNFYY…RSANTDLIKF (197 aa)).

It carries out the reaction 4-(6-hydroxypyridin-3-yl)-4-oxobutanoate + 2 NADH + O2 + 2 H(+) = 2,5-dihydroxypyridine + succinate semialdehyde + 2 NAD(+) + H2O. It participates in alkaloid degradation; nicotine degradation. Involved in the nicotine degradation. Catalyzes the cleavage of 6-hydroxy-3-succinoylpyridine (HSP) by incorporation of oxygen at the 3-position to produce to 2,5-dihydroxypyridine (DHP) and succinic semialdehyde. The sequence is that of 6-hydroxy-3-succinoylpyridine 3-monooxygenase HspA from Pseudomonas putida (strain DSM 28022 / S16).